We begin with the raw amino-acid sequence, 325 residues long: Brorin (325 aa).

The first 27 residues, 1-27 (MPSSTAMAVGALSSSLLVTCCLMVALC), serve as a signal peptide directing secretion. The interval 37 to 121 (AQAPEQPGQE…RPRGDTPQAE (85 aa)) is disordered. Composition is skewed to basic and acidic residues over residues 44–56 (GQEK…RDGP) and 64–78 (RPAR…DWKS). The short motif at 114-116 (RGD) is the Mediates cell adhesion element. 2 VWFC domains span residues 153–212 (KGCV…PQCK) and 216–274 (NYCE…PICK).

Peripherally associated with AMPAR complex. AMPAR complex consists of an inner core made of 4 pore-forming GluA/GRIA proteins (GRIA1, GRIA2, GRIA3 and GRIA4) and 4 major auxiliary subunits arranged in a twofold symmetry. One of the two pairs of distinct binding sites is occupied either by CNIH2, CNIH3 or CACNG2, CACNG3. The other harbors CACNG2, CACNG3, CACNG4, CACNG8 or GSG1L. This inner core of AMPAR complex is complemented by outer core constituents binding directly to the GluA/GRIA proteins at sites distinct from the interaction sites of the inner core constituents. Outer core constituents include at least PRRT1, PRRT2, CKAMP44/SHISA9, FRRS1L and NRN1. The proteins of the inner and outer core serve as a platform for other, more peripherally associated AMPAR constituents, including VWC2. Alone or in combination, these auxiliary subunits control the gating and pharmacology of the AMPAR complex and profoundly impact their biogenesis and protein processing.

Its subcellular location is the secreted. It localises to the extracellular space. It is found in the extracellular matrix. The protein resides in the basement membrane. The protein localises to the synapse. In terms of biological role, BMP antagonist which may play a role in neural development. Promotes cell adhesion. This is Brorin (VWC2) from Homo sapiens (Human).